A 285-amino-acid chain; its full sequence is Pantothenate synthetase (285 aa).

An ATP-binding site is contributed by 30–37 (MGYLHAGH). The active-site Proton donor is the His-37. Gln-61 lines the (R)-pantoate pocket. Gln-61 is a binding site for beta-alanine. Residue 147–150 (GQKD) participates in ATP binding. Gln-153 contacts (R)-pantoate. ATP-binding positions include Val-176 and 184-187 (LSSR).

It belongs to the pantothenate synthetase family. As to quaternary structure, homodimer.

Its subcellular location is the cytoplasm. It catalyses the reaction (R)-pantoate + beta-alanine + ATP = (R)-pantothenate + AMP + diphosphate + H(+). Its pathway is cofactor biosynthesis; (R)-pantothenate biosynthesis; (R)-pantothenate from (R)-pantoate and beta-alanine: step 1/1. Functionally, catalyzes the condensation of pantoate with beta-alanine in an ATP-dependent reaction via a pantoyl-adenylate intermediate. This is Pantothenate synthetase from Solidesulfovibrio magneticus (strain ATCC 700980 / DSM 13731 / RS-1) (Desulfovibrio magneticus).